Consider the following 319-residue polypeptide: Ribonucleoside-diphosphate reductase small chain (319 aa).

Fe cation is bound by residues aspartate 70, glutamate 101, and histidine 104. Tyrosine 108 is an active-site residue. The Fe cation site is built by glutamate 163, glutamate 197, and histidine 200. An interaction with R1 region spans residues 313-319 (FSLDVDF).

Belongs to the ribonucleoside diphosphate reductase small chain family. As to quaternary structure, interacts with RNR1/OPG080 subunit. Can interact with host RNR1 supunit. Requires Fe cation as cofactor.

The catalysed reaction is a 2'-deoxyribonucleoside 5'-diphosphate + [thioredoxin]-disulfide + H2O = a ribonucleoside 5'-diphosphate + [thioredoxin]-dithiol. Its function is as follows. Ribonucleoside-diphosphate reductase holoenzyme provides the precursors necessary for viral DNA synthesis. Allows virus growth in non-dividing cells. Catalyzes the biosynthesis of deoxyribonucleotides from the corresponding ribonucleotides. This chain is Ribonucleoside-diphosphate reductase small chain (OPG048), found in Vaccinia virus (strain Copenhagen) (VACV).